Consider the following 393-residue polypeptide: MRDAIPLGRIAGFVVNVHWSVLVILWLFTWSLATMLPGTVGGYPAVVYWLLGAGGAVMLLASLLAHELAHAVVARRAGVSVESVTLWLFGGVTALGGEAKTPKAAFRIAFAGPATSLALSATFGALAITLAGVRTPAIVISVAWWLATVNLLLGLFNLLPGAPLDGGRLVRAYLWRRHGDSVRAGIGAARAGRVVALVLIALGLAEFVAGGLVGGVWLAFIGWFIFAAAREEETRISTQQLFAGVRVADAMTAQPHTAPGWINVEDFIQRYVLGERHSAYPVADRDGSITGLVALRQLRDVAPSRRSTTSVGDIALPLHSVPTARPQEPLTALLERMAPLGPRSRALVTEGSAVVGIVTPSDVARLIDVYRLAQPEPTFTTSPQDADRFSDAG.

Helical transmembrane passes span 10–30 and 45–65; these read IAGF…LFTW and AVVY…SLLA. A Zn(2+)-binding site is contributed by H66. E67 is a catalytic residue. H70 provides a ligand contact to Zn(2+). 4 helical membrane passes run 77–97, 108–128, 136–156, and 207–227; these read AGVS…ALGG, IAFA…ALAI, PAIV…LGLF, and FVAG…FIFA. CBS domains lie at 251-308 and 315-376; these read MTAQ…RRST and ALPL…AQPE.

It belongs to the peptidase M50B family. The cofactor is Zn(2+).

Its subcellular location is the cell membrane. The protein is Putative zinc metalloprotease Rip3 (rip3) of Mycobacterium tuberculosis (strain ATCC 35801 / TMC 107 / Erdman).